Reading from the N-terminus, the 436-residue chain is F-box/LRR-repeat protein 20 (436 aa).

An F-box domain is found at 22–68 (AVINKKLPKELLLRIFSFLDVVTLCRCAQVSRAWNVLALDGSNWQRI). LRR repeat units lie at residues 74–100 (QRDI…SLRG), 101–126 (CLGV…NLNG), 127–152 (CTKT…DLAS), 153–178 (CTSI…NISW), 179–204 (CDQV…FLKG), 205–230 (CTQL…NLQT), 231–256 (CLQI…CASG), 257–282 (CSNI…EVAR), 283–308 (CSQL…DLEE), 309–334 (CVQI…SLSH), 335–363 (CELI…ELDN), 364–388 (CPLI…ELYD), and 389–414 (CQQI…AYFA). A Phosphothreonine modification is found at T417. S421 bears the Phosphoserine mark.

As to quaternary structure, interacts with SKP1 and CUL1.

The protein resides in the cytoplasm. In terms of biological role, substrate-recognition component of the SCF (SKP1-CUL1-F-box protein)-type E3 ubiquitin ligase complex. Role in neural transmission. The protein is F-box/LRR-repeat protein 20 (FBXL20) of Bos taurus (Bovine).